The following is a 411-amino-acid chain: LIM domain-binding protein 1 (411 aa).

Disordered regions lie at residues 284–330 (PPAE…TFAL) and 367–411 (DAAN…QASQ). Low complexity predominate over residues 302–318 (SGGSTMSSGGGNTNNSN). The region spanning 336–375 (DVMVVGEPTLMGGEFGDEDERLITRLENTQFDAANGIDDE) is the LIM interaction domain (LID) domain.

This sequence belongs to the LDB family. As to quaternary structure, forms homodimers and heterodimers. In terms of tissue distribution, first expressed at stages 15-16 in presumptive limb mesoderm. As limb outgrowth proceeds, expressed in the entire limb bud, concentrating in the distal mesoderm throughout limb development. Both hindlimbs and forelimbs exhibit similar expression patterns.

Its subcellular location is the nucleus. Functionally, binds to the LIM domain of a wide variety of LIM domain-containing transcription factors. The sequence is that of LIM domain-binding protein 1 from Gallus gallus (Chicken).